The sequence spans 895 residues: Protein translocase subunit SecA (895 aa).

Residues glutamine 89, 107-111, and aspartate 502 contribute to the ATP site; that span reads GEGKT. 2 disordered regions span residues 560–579 and 848–884; these read RRID…PGRT and AAPA…CGSG. Residues cysteine 879, cysteine 881, cysteine 890, and histidine 891 each coordinate Zn(2+).

Belongs to the SecA family. Monomer and homodimer. Part of the essential Sec protein translocation apparatus which comprises SecA, SecYEG and auxiliary proteins SecDF-YajC and YidC. The cofactor is Zn(2+).

The protein resides in the cell inner membrane. The protein localises to the cytoplasm. The enzyme catalyses ATP + H2O + cellular proteinSide 1 = ADP + phosphate + cellular proteinSide 2.. Part of the Sec protein translocase complex. Interacts with the SecYEG preprotein conducting channel. Has a central role in coupling the hydrolysis of ATP to the transfer of proteins into and across the cell membrane, serving both as a receptor for the preprotein-SecB complex and as an ATP-driven molecular motor driving the stepwise translocation of polypeptide chains across the membrane. The protein is Protein translocase subunit SecA of Ruegeria sp. (strain TM1040) (Silicibacter sp.).